Here is a 554-residue protein sequence, read N- to C-terminus: MNKKNKKLFLEALEKKFKGESPEEKKTTFYCFGGWKQSERKREFVEYAKKLAKKRGIPFYNPDIGVPLGQRKLMAYRISGTDAYVEGDDLHFVNNAAIQQMVDDIKRTVIVGMDTAHAVLEKRLGVEVTPETINEYMETINHALPGGAVVQEHMVEVHPGLVDDCYAKIFTGNDELADELDKRVLIDINKEFPEEQAEMLKKYIGNRTYQVNRVPTIVVRCCDGGTVSRWSAMQIGMSFISAYKLCAGEAAIADFSFAAKHADVIEMGTILPARRARGPNEPGGIPFGVFADIIQTSRVSDDPARISLEVIGAAATLYDQVWLGSYMSGGVGFTQYASATYTDDILDDFVYYGAEYVEDKYGFCGVKPSMEVVKDIATEVTLYGLEQYEEYPTLLEDHFGGSQRAAVVAAAAGCSTAFATGNSNAGINAWYLSQILHKEGHSRLGFYGYDLQDQCGASNSLSIRSDEGLVHELRGPNYPNYAMNVGHQPEYAGIAQAPHAARGDAFVVNPLIKVAFADNDLSFDFRWPRKEIARGALREFMPDGERTLIIPASK.

Gln-151 contacts coenzyme F430. Coenzyme B contacts are provided by residues Arg-229, 260-261, and Arg-274; that span reads KH. Residues Tyr-336 and Tyr-447 each coordinate coenzyme M.

The protein belongs to the methyl-coenzyme M reductase alpha subunit family. MCR is a hexamer of two alpha, two beta, and two gamma chains, forming a dimer of heterotrimers. Requires coenzyme F430 as cofactor.

It carries out the reaction coenzyme B + methyl-coenzyme M = methane + coenzyme M-coenzyme B heterodisulfide. It participates in one-carbon metabolism; methyl-coenzyme M reduction; methane from methyl-coenzyme M: step 1/1. Its function is as follows. Component of the methyl-coenzyme M reductase (MCR) I that catalyzes the reductive cleavage of methyl-coenzyme M (CoM-S-CH3 or 2-(methylthio)ethanesulfonate) using coenzyme B (CoB or 7-mercaptoheptanoylthreonine phosphate) as reductant which results in the production of methane and the mixed heterodisulfide of CoB and CoM (CoM-S-S-CoB). This is the final step in methanogenesis. The sequence is that of Methyl-coenzyme M reductase II subunit alpha (mrtA) from Methanothermus fervidus (strain ATCC 43054 / DSM 2088 / JCM 10308 / V24 S).